The following is a 219-amino-acid chain: Protein-L-isoaspartate O-methyltransferase 1 (219 aa).

Residue Ser-67 is part of the active site.

Belongs to the methyltransferase superfamily. L-isoaspartyl/D-aspartyl protein methyltransferase family.

The protein resides in the cytoplasm. The enzyme catalyses [protein]-L-isoaspartate + S-adenosyl-L-methionine = [protein]-L-isoaspartate alpha-methyl ester + S-adenosyl-L-homocysteine. In terms of biological role, catalyzes the methyl esterification of L-isoaspartyl residues in peptides and proteins that result from spontaneous decomposition of normal L-aspartyl and L-asparaginyl residues. It plays a role in the repair and/or degradation of damaged proteins. This Geotalea uraniireducens (strain Rf4) (Geobacter uraniireducens) protein is Protein-L-isoaspartate O-methyltransferase 1.